A 263-amino-acid chain; its full sequence is Acyl-[acyl-carrier-protein]--UDP-N-acetylglucosamine O-acyltransferase (263 aa).

The protein belongs to the transferase hexapeptide repeat family. LpxA subfamily. In terms of assembly, homotrimer.

The protein localises to the cytoplasm. The enzyme catalyses a (3R)-hydroxyacyl-[ACP] + UDP-N-acetyl-alpha-D-glucosamine = a UDP-3-O-[(3R)-3-hydroxyacyl]-N-acetyl-alpha-D-glucosamine + holo-[ACP]. It functions in the pathway glycolipid biosynthesis; lipid IV(A) biosynthesis; lipid IV(A) from (3R)-3-hydroxytetradecanoyl-[acyl-carrier-protein] and UDP-N-acetyl-alpha-D-glucosamine: step 1/6. Involved in the biosynthesis of lipid A, a phosphorylated glycolipid that anchors the lipopolysaccharide to the outer membrane of the cell. The chain is Acyl-[acyl-carrier-protein]--UDP-N-acetylglucosamine O-acyltransferase from Stenotrophomonas maltophilia (strain K279a).